The primary structure comprises 547 residues: MALSSFNLSSLLFLLFFTPSVFSYSYQPSLNPHETSATSFCKNTPYPDACFTSLKLSISINISPNILSFLLQTLQTALSEAGKLTDLLSGAGVSNNLVEGQRGSLQDCKDLHHITSSFLKRSISKIQDGVNDSRKLADARAYLSAALTNKITCLEGLESASGPLKPKLVTSFTTTYKHISNSLSALPKQRRTTNPKTGGNTKNRRLLGLFPDWVYKKDHRFLEDSSDGYDEYDPSESLVVAADGTGNFSTINEAISFAPNMSNDRVLIYVKEGVYDENIDIPIYKTNIVLIGDGSDVTFITGNRSVGDGWTTFRSATLAVSGEGFLARDIMITNTAGPEKHQAVALRVNADFVALYRCVIDGYQDTLYTHSFRQFYRECDIYGTIDYIFGNAAVVFQGCNIVSKLPMPGQFTVITAQSRDTQDEDTGISMQNCSILASEDLFNSSNKVKSYLGRPWREFSRTVVMESYIDEFIDGSGWSKWNGGEALDTLYYGEYNNNGPGSETVKRVNWPGFHIMGYEDAFNFTATEFITGDGWLGSTSFPYDNGI.

Residues 1-23 form the signal peptide; sequence MALSSFNLSSLLFLLFFTPSVFS. The pectinesterase inhibitor 12 stretch occupies residues 31-185; the sequence is NPHETSATSF…YKHISNSLSA (155 aa). N-linked (GlcNAc...) asparagine glycosylation is found at Asn131, Asn247, Asn260, and Asn303. The segment at 237 to 533 is pectinesterase 12; sequence SLVVAADGTG…FTATEFITGD (297 aa). Residues Thr312 and Gln342 each contribute to the substrate site. Residue Asp365 is the Proton donor; for pectinesterase activity of the active site. Cys379 and Cys399 are disulfide-bonded. Asp386 (nucleophile; for pectinesterase activity) is an active-site residue. N-linked (GlcNAc...) asparagine glycosylation is found at Asn432 and Asn443. Substrate contacts are provided by Arg454 and Trp456. N-linked (GlcNAc...) asparagine glycosylation is present at Asn523.

In the N-terminal section; belongs to the PMEI family. It in the C-terminal section; belongs to the pectinesterase family. Expressed in siliques.

It is found in the secreted. Its subcellular location is the cell wall. The enzyme catalyses [(1-&gt;4)-alpha-D-galacturonosyl methyl ester](n) + n H2O = [(1-&gt;4)-alpha-D-galacturonosyl](n) + n methanol + n H(+). It functions in the pathway glycan metabolism; pectin degradation; 2-dehydro-3-deoxy-D-gluconate from pectin: step 1/5. In terms of biological role, acts in the modification of cell walls via demethylesterification of cell wall pectin. The polypeptide is Probable pectinesterase/pectinesterase inhibitor 12 (PME12) (Arabidopsis thaliana (Mouse-ear cress)).